The following is a 210-amino-acid chain: MIAARLRLSQWLSPSFPVSGYAYSHGLEQAISTGDIADAEDLLAWLQALLTSGACQADGVLVARAAAGDPLEPLCEAAEALAGSAERWSETRDQGAAFVSTTNALCDTALRPMPYPVAVGARARALGLPVGEVVALYLQAFLGNLISGAVRLIPLGQTEGQQVSQSLHPTISTQARCLATRPLSEIGTGAVRAELAAMAHETQEVRIFRT.

The protein belongs to the UreF family. As to quaternary structure, ureD, UreF and UreG form a complex that acts as a GTP-hydrolysis-dependent molecular chaperone, activating the urease apoprotein by helping to assemble the nickel containing metallocenter of UreC. The UreE protein probably delivers the nickel.

Its subcellular location is the cytoplasm. In terms of biological role, required for maturation of urease via the functional incorporation of the urease nickel metallocenter. The protein is Urease accessory protein UreF of Dinoroseobacter shibae (strain DSM 16493 / NCIMB 14021 / DFL 12).